Reading from the N-terminus, the 419-residue chain is eIF5-mimic protein 2-A (419 aa).

Residues M1–R15 show a composition bias toward polar residues. A disordered region spans residues M1–P29. A W2 domain is found at N247–E414.

This sequence belongs to the BZW family.

Functionally, translation initiation regulator which may repress repeat-associated non-AUG (RAN) initiated translation probably by acting as a competitive inhibitor of eukaryotic translation initiation factor 5 (EIF5) function. Enhances histone H4 gene transcription but does not seem to bind DNA directly. The polypeptide is eIF5-mimic protein 2-A (bzw1a) (Danio rerio (Zebrafish)).